The sequence spans 432 residues: Glutamate--cysteine ligase EgtA (432 aa).

The protein belongs to the glutamate--cysteine ligase type 2 family. EgtA subfamily.

It catalyses the reaction L-cysteine + L-glutamate + ATP = gamma-L-glutamyl-L-cysteine + ADP + phosphate + H(+). Its pathway is amino-acid biosynthesis; ergothioneine biosynthesis. In terms of biological role, catalyzes the synthesis of gamma-glutamylcysteine (gamma-GC) which is used as substrate for the biosynthesis of the low-molecular thiol compound ergothioneine (ERG). ERG is one of the major redox buffers which protects bacteria against redox stressors and antibiotics; loss of ERG or mycothiol (MSH, the other major redox buffer in this bacteria) leads to respiratory alterations and bioenergetic deficiencies that negatively impact virulence. In Mycobacterium tuberculosis (strain CDC 1551 / Oshkosh), this protein is Glutamate--cysteine ligase EgtA (egtA).